The chain runs to 404 residues: MGSLLRPVDLVNQPLGFQERYKILQKLFKQLQKAYAHTKGTNIDLERLATRLEVHVAKNSLSGQSYKFNMSILLRDVLKYKGDLSKIKINGRPLKGAKPHLSSIGNANSITTKSKAMEALKALILDSKVLEKNGYIVKEMQNKTNDDNSTQLYAPCLRCSSNFKKTDIMEKTLCRYHPLKRIYNRDTKNHQYPCCGETTDSVSFLRLGCKTFFHHVFRGESYDELCKISKFSSTDDIDGVENVLSLDCEMAFTSLGYEMIRLTIVDFFTGKTLFDHVIQPIGDIVDLNSDFSGVHEIDRTNCPTYKEALDVFLSENLINKNSILIGHGLENDLNVMRLFHNKVIDTAILYSRTKFKVSLKNLAFEVLSRKIQNGEHDSSQDAIATMDVVKVKIGISPSQNKWEK.

The Exonuclease domain occupies 243-389; that stretch reads VLSLDCEMAF…QDAIATMDVV (147 aa).

The protein belongs to the REXO1/REXO3 family.

The protein resides in the cytoplasm. The protein localises to the nucleus. Its function is as follows. 3' to 5' exoribonuclease required for proper 3' end maturation of MRP RNA and of the U5L snRNA. The polypeptide is RNA exonuclease 3 (REX3) (Saccharomyces cerevisiae (strain ATCC 204508 / S288c) (Baker's yeast)).